The primary structure comprises 164 residues: Flavodoxin (164 aa).

The Flavodoxin-like domain occupies 4 to 160 (IGIFFGTDSG…RISKWVEQVK (157 aa)).

This sequence belongs to the flavodoxin family. FMN serves as cofactor.

Low-potential electron donor to a number of redox enzymes. This Helicobacter pylori (strain ATCC 700392 / 26695) (Campylobacter pylori) protein is Flavodoxin (fldA).